The sequence spans 428 residues: D-alanine--D-alanine ligase (428 aa).

Residues 205–424 (KVVLDAAGIP…YTELITRLIE (220 aa)) form the ATP-grasp domain. 237–299 (DAGLTYPLFV…EQGIDGREIE (63 aa)) contributes to the ATP binding site. Mg(2+) contacts are provided by Asp378, Glu391, and Asn393.

Belongs to the D-alanine--D-alanine ligase family. Mg(2+) is required as a cofactor. It depends on Mn(2+) as a cofactor.

The protein resides in the cytoplasm. It catalyses the reaction 2 D-alanine + ATP = D-alanyl-D-alanine + ADP + phosphate + H(+). Its pathway is cell wall biogenesis; peptidoglycan biosynthesis. Functionally, cell wall formation. The polypeptide is D-alanine--D-alanine ligase (Bifidobacterium longum (strain NCC 2705)).